The primary structure comprises 290 residues: Glycine-N-acyltransferase-like protein 3 (290 aa).

It carries out the reaction an acyl-CoA + glycine = an N-acylglycine + CoA + H(+). The enzyme catalyses (9Z)-octadecenoyl-CoA + glycine = N-(9Z-octadecenoyl)glycine + CoA + H(+). The catalysed reaction is hexadecanoyl-CoA + glycine = N-hexadecanoylglycine + CoA + H(+). It functions in the pathway lipid metabolism. Its function is as follows. Catalyzes the conjugation of long-chain fatty acyl-CoA thioester and glycine to produce long-chain N-(fatty acyl)glycine, an intermediate in the primary fatty acid amide biosynthetic pathway. The protein is Glycine-N-acyltransferase-like protein 3 of Mus musculus (Mouse).